Reading from the N-terminus, the 31-residue chain is Cytochrome b6-f complex subunit 6 (31 aa).

The chain crosses the membrane as a helical span at residues 4–24 (ITSYFGFLLAALTITSVLFIG).

Belongs to the PetL family. In terms of assembly, the 4 large subunits of the cytochrome b6-f complex are cytochrome b6, subunit IV (17 kDa polypeptide, PetD), cytochrome f and the Rieske protein, while the 4 small subunits are PetG, PetL, PetM and PetN. The complex functions as a dimer.

It localises to the plastid. Its subcellular location is the chloroplast thylakoid membrane. Functionally, component of the cytochrome b6-f complex, which mediates electron transfer between photosystem II (PSII) and photosystem I (PSI), cyclic electron flow around PSI, and state transitions. PetL is important for photoautotrophic growth as well as for electron transfer efficiency and stability of the cytochrome b6-f complex. This is Cytochrome b6-f complex subunit 6 from Arabidopsis thaliana (Mouse-ear cress).